Consider the following 130-residue polypeptide: Small ribosomal subunit protein uS9 (130 aa).

Positions 109-130 (RVKERKKPGLKKARKARQFSKR) are disordered. Positions 111–130 (KERKKPGLKKARKARQFSKR) are enriched in basic residues.

This sequence belongs to the universal ribosomal protein uS9 family.

In Mycoplasma mobile (strain ATCC 43663 / 163K / NCTC 11711) (Mesomycoplasma mobile), this protein is Small ribosomal subunit protein uS9.